A 1461-amino-acid polypeptide reads, in one-letter code: Regulation of nuclear pre-mRNA domain-containing protein 2 (1461 aa).

A2 carries the post-translational modification N-acetylalanine. At S16 the chain carries Phosphoserine. In terms of domain architecture, CID spans 19–149 (SAGALESSLD…ALREALSTTF (131 aa)). Disordered stretches follow at residues 311 to 438 (STLP…TSLS) and 469 to 504 (NTGV…TTSH). A compositionally biased stretch (basic and acidic residues) spans 352 to 368 (ESEKSATPEPVTDNRDV). S356 is modified (phosphoserine). T358 bears the Phosphothreonine mark. A compositionally biased stretch (acidic residues) spans 369–378 (EDMELSDVED). S374 carries the post-translational modification Phosphoserine. A compositionally biased stretch (basic and acidic residues) spans 379-394 (DGSKIIVEDRKEKPAE). A compositionally biased stretch (polar residues) spans 397 to 416 (AVSTSVPTKPTENISKASSC). Composition is skewed to low complexity over residues 417–426 (TPVPVTMTAT) and 473–491 (SPAS…NLTS). A phosphoserine mark is found at S473, S476, and S479. T482 carries the phosphothreonine modification. At S485 the chain carries Phosphoserine. At T517 the chain carries Phosphothreonine. The segment at 547–623 (TGNPVPASEA…SPGLPSTTFK (77 aa)) is disordered. Residues 553–566 (ASEAASQSTSASPA) are compositionally biased toward low complexity. S564 is subject to Phosphoserine. The span at 567–583 (NTTVSTIKGRNLPSSAQ) shows a compositional bias: polar residues. The residue at position 593 (S593) is a Phosphoserine. The segment covering 593 to 614 (SPNSSTSEVSSTSASKASIGQS) has biased composition (low complexity). The residue at position 598 (T598) is a Phosphothreonine. Residues S614, S663, S665, and S716 each carry the phosphoserine modification. 5 disordered regions span residues 696 to 849 (GSSA…MMNL), 900 to 997 (SENC…EKVL), 1016 to 1102 (ASRK…SGEP), 1132 to 1312 (STSG…APPL), and 1340 to 1461 (FGVL…PPRY). Phosphothreonine is present on T723. S730 carries the phosphoserine modification. T732 is modified (phosphothreonine). Over residues 742-752 (PTSSSVDTMSL) the composition is skewed to polar residues. 2 positions are modified to phosphoserine: S758 and S762. Positions 758–768 (SPGSSTPSSTR) are enriched in low complexity. The residue at position 763 (T763) is a Phosphothreonine. Phosphoserine is present on residues S769, S817, S826, S900, S909, S928, S965, and S976. Over residues 927-954 (RSPSPSKNDSFFTPDSNHNSLSQSTTGH) the composition is skewed to polar residues. The segment covering 1031–1055 (SKGTPSDGVSLSNLTQPSLTATDQQ) has biased composition (polar residues). A phosphoserine mark is found at S1068 and S1099. Residues 1141-1150 (GPSSASELAS) are compositionally biased toward low complexity. The segment covering 1151-1160 (LGGGGSGGLT) has biased composition (gly residues). A compositionally biased stretch (polar residues) spans 1174-1189 (FQESVGSFRSNSFNST). Composition is skewed to pro residues over residues 1267–1277 (FPTPPPPPPPG) and 1290–1299 (STPPPPPPPV). The residue at position 1366 (R1366) is an Asymmetric dimethylarginine. Over residues 1382-1391 (PHGGGGGGGS) the composition is skewed to gly residues. A compositionally biased stretch (basic and acidic residues) spans 1417–1434 (PRPDFRPREPFLSRDPFH). R1424 and R1430 each carry asymmetric dimethylarginine.

As to quaternary structure, associates with the RNA polymerase II complex.

This Homo sapiens (Human) protein is Regulation of nuclear pre-mRNA domain-containing protein 2 (RPRD2).